Here is a 122-residue protein sequence, read N- to C-terminus: Large ribosomal subunit protein uL14 (122 aa).

This sequence belongs to the universal ribosomal protein uL14 family. In terms of assembly, part of the 50S ribosomal subunit. Forms a cluster with proteins L3 and L19. In the 70S ribosome, L14 and L19 interact and together make contacts with the 16S rRNA in bridges B5 and B8.

Binds to 23S rRNA. Forms part of two intersubunit bridges in the 70S ribosome. The polypeptide is Large ribosomal subunit protein uL14 (Staphylococcus carnosus (strain TM300)).